A 266-amino-acid polypeptide reads, in one-letter code: Undecaprenyl-diphosphatase (266 aa).

The next 7 helical transmembrane spans lie at Val8–Ile28, Gln39–Phe59, Trp87–Ile107, Ser113–Val133, Ser188–Val208, Met219–Leu239, and Thr246–Trp266.

The protein belongs to the UppP family.

It is found in the cell inner membrane. The catalysed reaction is di-trans,octa-cis-undecaprenyl diphosphate + H2O = di-trans,octa-cis-undecaprenyl phosphate + phosphate + H(+). Catalyzes the dephosphorylation of undecaprenyl diphosphate (UPP). Confers resistance to bacitracin. In Thioalkalivibrio sulfidiphilus (strain HL-EbGR7), this protein is Undecaprenyl-diphosphatase.